Consider the following 250-residue polypeptide: Histone H1.1 (250 aa).

Positions methionine 1–serine 11 are enriched in polar residues. 2 disordered regions span residues methionine 1–valine 52 and glutamine 104–lysine 250. In terms of domain architecture, H15 spans serine 44–alanine 118. The segment covering lysine 122–lysine 133 has biased composition (basic and acidic residues). Residues alanine 140–alanine 161 are compositionally biased toward low complexity. Residues lysine 174–lysine 191 are compositionally biased toward basic and acidic residues. Residues threonine 192–lysine 234 are compositionally biased toward low complexity. Basic residues predominate over residues threonine 235–lysine 250.

Belongs to the histone H1/H5 family.

It localises to the nucleus. The protein resides in the chromosome. Histones H1 are necessary for the condensation of nucleosome chains into higher-order structures. This chain is Histone H1.1 (His1.1), found in Drosophila virilis (Fruit fly).